A 183-amino-acid chain; its full sequence is Acireductone dioxygenase (183 aa).

Residues M1–L21 form a disordered region. The Fe(2+) site is built by H90, H92, E96, and H135. H90, H92, E96, and H135 together coordinate Ni(2+).

The protein belongs to the acireductone dioxygenase (ARD) family. The cofactor is Fe(2+). Ni(2+) is required as a cofactor.

The protein resides in the cytoplasm. It localises to the nucleus. It catalyses the reaction 1,2-dihydroxy-5-(methylsulfanyl)pent-1-en-3-one + O2 = 4-methylsulfanyl-2-oxobutanoate + formate + 2 H(+). The enzyme catalyses 1,2-dihydroxy-5-(methylsulfanyl)pent-1-en-3-one + O2 = 3-(methylsulfanyl)propanoate + CO + formate + 2 H(+). It functions in the pathway amino-acid biosynthesis; L-methionine biosynthesis via salvage pathway; L-methionine from S-methyl-5-thio-alpha-D-ribose 1-phosphate: step 5/6. In terms of biological role, catalyzes 2 different reactions between oxygen and the acireductone 1,2-dihydroxy-3-keto-5-methylthiopentene (DHK-MTPene) depending upon the metal bound in the active site. Fe-containing acireductone dioxygenase (Fe-ARD) produces formate and 2-keto-4-methylthiobutyrate (KMTB), the alpha-ketoacid precursor of methionine in the methionine recycle pathway. Ni-containing acireductone dioxygenase (Ni-ARD) produces methylthiopropionate, carbon monoxide and formate, and does not lie on the methionine recycle pathway. This Ixodes scapularis (Black-legged tick) protein is Acireductone dioxygenase.